Reading from the N-terminus, the 99-residue chain is Small ribosomal subunit protein uS19c (99 aa).

This sequence belongs to the universal ribosomal protein uS19 family.

The protein localises to the plastid. It localises to the chloroplast. Functionally, protein S19 forms a complex with S13 that binds strongly to the 16S ribosomal RNA. This chain is Small ribosomal subunit protein uS19c, found in Oenothera biennis (German evening primrose).